We begin with the raw amino-acid sequence, 186 residues long: Ribosome-recycling factor (186 aa).

Belongs to the RRF family.

The protein localises to the cytoplasm. Functionally, responsible for the release of ribosomes from messenger RNA at the termination of protein biosynthesis. May increase the efficiency of translation by recycling ribosomes from one round of translation to another. In Albidiferax ferrireducens (strain ATCC BAA-621 / DSM 15236 / T118) (Rhodoferax ferrireducens), this protein is Ribosome-recycling factor.